The following is a 265-amino-acid chain: H-2 class II histocompatibility antigen, A-Q beta chain (265 aa).

Positions 1–27 (MALQIPSLLLSAAVVVLMVLSSPRTEG) are cleaved as a signal peptide. The beta-1 stretch occupies residues 28-122 (GNSERHFVAQ…VETHTSLRRL (95 aa)). Residues 28 to 227 (GNSERHFVAQ…AQSESARSKM (200 aa)) lie on the Extracellular side of the membrane. Disulfide bonds link Cys-42-Cys-106 and Cys-145-Cys-201. Asn-46 carries N-linked (GlcNAc...) asparagine glycosylation. A beta-2 region spans residues 123–217 (EQPNVAISLS…LKSPITVEWR (95 aa)). The region spanning 125–213 (PNVAISLSRT…EHPSLKSPIT (89 aa)) is the Ig-like C1-type domain. A connecting peptide region spans residues 218-227 (AQSESARSKM). A helical membrane pass occupies residues 228-247 (LSGIGGCVLGVIFLGLGLFI). Residues 248–265 (RHRSQKGPRGPPPAGLLQ) lie on the Cytoplasmic side of the membrane.

Belongs to the MHC class II family. Post-translationally, ubiquitinated in immature dendritic cells leading to down-regulation of MHC class II.

Its subcellular location is the membrane. In Mus musculus (Mouse), this protein is H-2 class II histocompatibility antigen, A-Q beta chain (H2-Ab1).